The primary structure comprises 197 residues: UPF0301 protein BAV3012 (197 aa).

It belongs to the UPF0301 (AlgH) family.

This is UPF0301 protein BAV3012 from Bordetella avium (strain 197N).